A 192-amino-acid chain; its full sequence is Imidazoleglycerol-phosphate dehydratase (192 aa).

This sequence belongs to the imidazoleglycerol-phosphate dehydratase family.

The protein localises to the cytoplasm. It carries out the reaction D-erythro-1-(imidazol-4-yl)glycerol 3-phosphate = 3-(imidazol-4-yl)-2-oxopropyl phosphate + H2O. It functions in the pathway amino-acid biosynthesis; L-histidine biosynthesis; L-histidine from 5-phospho-alpha-D-ribose 1-diphosphate: step 6/9. This is Imidazoleglycerol-phosphate dehydratase from Staphylococcus epidermidis (strain ATCC 35984 / DSM 28319 / BCRC 17069 / CCUG 31568 / BM 3577 / RP62A).